A 110-amino-acid polypeptide reads, in one-letter code: Large ribosomal subunit protein uL22 (110 aa).

The protein belongs to the universal ribosomal protein uL22 family. Part of the 50S ribosomal subunit.

This protein binds specifically to 23S rRNA; its binding is stimulated by other ribosomal proteins, e.g. L4, L17, and L20. It is important during the early stages of 50S assembly. It makes multiple contacts with different domains of the 23S rRNA in the assembled 50S subunit and ribosome. Functionally, the globular domain of the protein is located near the polypeptide exit tunnel on the outside of the subunit, while an extended beta-hairpin is found that lines the wall of the exit tunnel in the center of the 70S ribosome. The polypeptide is Large ribosomal subunit protein uL22 (Pseudomonas savastanoi pv. phaseolicola (strain 1448A / Race 6) (Pseudomonas syringae pv. phaseolicola (strain 1448A / Race 6))).